Reading from the N-terminus, the 661-residue chain is Polyadenylate-binding protein, cytoplasmic and nuclear (661 aa).

The span at 1–11 (MSAAETNQVQE) shows a compositional bias: polar residues. The segment at 1–61 (MSAAETNQVQ…SAEEQGESSG (61 aa)) is disordered. Low complexity predominate over residues 20-51 (SSSSPAAGGATTATTTNNAESSDATSSSVPAD). RRM domains lie at 67-145 (ASLY…WSQR), 155-232 (GNIF…KHVS), 248-325 (TNIY…RAQK), and 351-428 (VNLF…LAQR). The interval 473-563 (FPPNGRGNAP…PNRPAGGNVP (91 aa)) is disordered. The span at 501 to 511 (EQWPRPGPNGQ) shows a compositional bias: pro residues. Polar residues predominate over residues 523–532 (QDFNGQNMRP). Residues 533-549 (QQQQQQQQQQQQQQQQQ) show a composition bias toward low complexity. In terms of domain architecture, PABC spans 563-644 (PAKDLAALIA…ALNAFEEYKN (82 aa)).

Belongs to the polyadenylate-binding protein type-1 family.

It is found in the cytoplasm. The protein resides in the nucleus. Its function is as follows. Binds the poly(A) tail of mRNA. Appears to be an important mediator of the multiple roles of the poly(A) tail in mRNA biogenesis, stability and translation. In the nucleus, involved in both mRNA cleavage and polyadenylation. Is also required for efficient mRNA export to the cytoplasm. Acts in concert with a poly(A)-specific nuclease (PAN) to affect poly(A) tail shortening, which may occur concomitantly with either nucleocytoplasmic mRNA transport or translational initiation. In the cytoplasm, stimulates translation initiation and regulates mRNA decay through translation termination-coupled poly(A) shortening, probably mediated by PAN. The polypeptide is Polyadenylate-binding protein, cytoplasmic and nuclear (PAB1) (Lodderomyces elongisporus (strain ATCC 11503 / CBS 2605 / JCM 1781 / NBRC 1676 / NRRL YB-4239) (Yeast)).